Here is a 60-residue protein sequence, read N- to C-terminus: MSEVKVRDNESLESALKRFKRSCAKAGVLSEVRKREHYEKPSVKRKKKSEAARRRKSKVR.

Residues 35-60 (REHYEKPSVKRKKKSEAARRRKSKVR) are disordered. A compositionally biased stretch (basic residues) spans 43 to 60 (VKRKKKSEAARRRKSKVR).

This sequence belongs to the bacterial ribosomal protein bS21 family.

This Clostridium novyi (strain NT) protein is Small ribosomal subunit protein bS21.